Reading from the N-terminus, the 581-residue chain is Interleukin-22 receptor subunit alpha-1 (581 aa).

The signal sequence occupies residues 1 to 15 (MKTLLTILTVGSLAA). Residues 16–230 (HTTVDTSGLL…TLPDRTWAYS (215 aa)) are Extracellular-facing. Fibronectin type-III domains are found at residues 18 to 115 (TVDT…RFSS) and 141 to 221 (PTLT…RVKT). C71 and C79 form a disulfide bridge. 2 N-linked (GlcNAc...) asparagine glycosylation sites follow: N80 and N172. A disulfide bond links C128 and C217. Residues 231–251 (FSGAVLFSMGFLVGLLCYLGY) form a helical membrane-spanning segment. Residues 252-581 (KYITKPPVPP…GLALTVQWES (330 aa)) are Cytoplasmic-facing. The tract at residues 343 to 364 (QQTLSPPSYAPKAVPEVQPPSY) is disordered. 2 positions are modified to phosphoserine; by GSK3-beta: S410 and S414. K449 participates in a covalent cross-link: Glycyl lysine isopeptide (Lys-Gly) (interchain with G-Cter in ubiquitin).

The protein belongs to the type II cytokine receptor family. Heterodimer with IL10RB and with IL20RB. Post-translationally, phosphorylated by GSK3-BETA and MAPK; phosphorylation by GSK3-BETA stabilizes IL22RA1 by preventing its proteasomal degradation. Expressed in kidney, liver and lung.

It localises to the cell membrane. Its function is as follows. Component of the receptor for IL20, IL22 and IL24. Component of IL22 receptor formed by IL22RA1 and IL10RB enabling IL22 signaling via JAK/STAT pathways. IL22 also induces activation of MAPK1/MAPK3 and Akt kinases pathways. Component of one of the receptor for IL20 and IL24 formed by IL22RA1 and IL20RB also signaling through STATs activation. Mediates IL24 antiangiogenic activity as well as IL24 inhibitory effect on endothelial cell tube formation and differentiation. In Mus musculus (Mouse), this protein is Interleukin-22 receptor subunit alpha-1 (Il22ra1).